We begin with the raw amino-acid sequence, 332 residues long: Phenylalanine--tRNA ligase alpha subunit (332 aa).

Glutamate 252 is a binding site for Mg(2+).

It belongs to the class-II aminoacyl-tRNA synthetase family. Phe-tRNA synthetase alpha subunit type 1 subfamily. In terms of assembly, tetramer of two alpha and two beta subunits. Requires Mg(2+) as cofactor.

It is found in the cytoplasm. It carries out the reaction tRNA(Phe) + L-phenylalanine + ATP = L-phenylalanyl-tRNA(Phe) + AMP + diphosphate + H(+). This Marinobacter nauticus (strain ATCC 700491 / DSM 11845 / VT8) (Marinobacter aquaeolei) protein is Phenylalanine--tRNA ligase alpha subunit.